Here is a 298-residue protein sequence, read N- to C-terminus: Probable 2-(5''-triphosphoribosyl)-3'-dephosphocoenzyme-A synthase 2 (298 aa).

It belongs to the CitG/MdcB family.

It catalyses the reaction 3'-dephospho-CoA + ATP = 2'-(5''-triphospho-alpha-D-ribosyl)-3'-dephospho-CoA + adenine. The chain is Probable 2-(5''-triphosphoribosyl)-3'-dephosphocoenzyme-A synthase 2 from Salmonella paratyphi A (strain ATCC 9150 / SARB42).